A 359-amino-acid chain; its full sequence is tRNA-specific 2-thiouridylase MnmA (359 aa).

ATP is bound by residues 6–13 (AMSGGVDS) and Leu32. The active-site Nucleophile is the Cys97. Residues Cys97 and Cys195 are joined by a disulfide bond. Position 121 (Gly121) interacts with ATP. Residues 144–146 (KDQ) form an interaction with tRNA region. Cys195 serves as the catalytic Cysteine persulfide intermediate.

The protein belongs to the MnmA/TRMU family.

Its subcellular location is the cytoplasm. It carries out the reaction S-sulfanyl-L-cysteinyl-[protein] + uridine(34) in tRNA + AH2 + ATP = 2-thiouridine(34) in tRNA + L-cysteinyl-[protein] + A + AMP + diphosphate + H(+). Functionally, catalyzes the 2-thiolation of uridine at the wobble position (U34) of tRNA, leading to the formation of s(2)U34. This chain is tRNA-specific 2-thiouridylase MnmA, found in Tropheryma whipplei (strain Twist) (Whipple's bacillus).